A 61-amino-acid chain; its full sequence is Large ribosomal subunit protein uL30 (61 aa).

This sequence belongs to the universal ribosomal protein uL30 family. As to quaternary structure, part of the 50S ribosomal subunit.

In Lactobacillus delbrueckii subsp. bulgaricus (strain ATCC 11842 / DSM 20081 / BCRC 10696 / JCM 1002 / NBRC 13953 / NCIMB 11778 / NCTC 12712 / WDCM 00102 / Lb 14), this protein is Large ribosomal subunit protein uL30.